A 340-amino-acid chain; its full sequence is Heat-inducible transcription repressor HrcA (340 aa).

The protein belongs to the HrcA family.

Negative regulator of class I heat shock genes (grpE-dnaK-dnaJ and groELS operons). Prevents heat-shock induction of these operons. In Burkholderia ambifaria (strain MC40-6), this protein is Heat-inducible transcription repressor HrcA.